A 270-amino-acid polypeptide reads, in one-letter code: MTRRVQYRHFLWPRPRLDAIDWLMSDASYRDAIFSTPLDRVANFSFDEKVVACFPDMIRRSVPGYGQILGMLGLIAERHLRFGAHVYDLGCSLGAVTLALAGRLPPDAFTLTGVDLSPTMVARARETLGEECPDHRIDIVEGDIRHVDYRPAGMIVLNFTLQFLPPEDRRAVIERLYAALEPGGVLVLSEKIVLPDEQENAWLVERYHDFKRANGYSDMEISQKRTALENVLVPDTLDAHHERLHEAGFTRVSTWFQYLNFASMVAFKDA.

S-adenosyl-L-methionine contacts are provided by residues tyrosine 65, 90–92 (GCS), 143–144 (DI), asparagine 158, and arginine 225.

This sequence belongs to the class I-like SAM-binding methyltransferase superfamily. Cx-SAM synthase family. In terms of assembly, homodimer.

The enzyme catalyses prephenate + S-adenosyl-L-methionine = carboxy-S-adenosyl-L-methionine + 3-phenylpyruvate + H2O. In terms of biological role, catalyzes the conversion of S-adenosyl-L-methionine (SAM) to carboxy-S-adenosyl-L-methionine (Cx-SAM). The protein is Carboxy-S-adenosyl-L-methionine synthase of Chromohalobacter salexigens (strain ATCC BAA-138 / DSM 3043 / CIP 106854 / NCIMB 13768 / 1H11).